Here is a 430-residue protein sequence, read N- to C-terminus: Endochitinase 46 (430 aa).

The first 22 residues, Met1 to Ala22, serve as a signal peptide directing secretion. Positions Ser23 to Arg35 are excised as a propeptide. The GH18 domain maps to Tyr39–Leu408. Chitin contacts are provided by residues Gly103–Thr104 and Gly130–Thr133. Catalysis depends on Glu172, which acts as the Proton donor. Tyr173 serves as a coordination point for chitin. Asn219 carries N-linked (GlcNAc...) asparagine glycosylation. Chitin-binding positions include Met238–Asp241 and Trp385.

The protein belongs to the glycosyl hydrolase 18 family. Chitinase class V subfamily.

It localises to the secreted. It catalyses the reaction Random endo-hydrolysis of N-acetyl-beta-D-glucosaminide (1-&gt;4)-beta-linkages in chitin and chitodextrins.. Its function is as follows. Secreted chitinase involved in the degradation of chitin, a component of the cell walls of fungi and exoskeletal elements of some animals (including worms and arthropods). Plays a morphogenetic role during apical growth, cell division and differentiation (cell wall morphogenesis). Also acts as an antifungal agent. Involved in the degradation and further assimilation of phytopathogenic fungi, namely mycoparasitism, the major mechanism accounting for the antagonistic activity against phytopathogenic fungi displayed by Trichoderma. This Trichoderma harzianum (Hypocrea lixii) protein is Endochitinase 46 (chit46).